The sequence spans 62 residues: Translational regulator CsrA (62 aa).

The protein belongs to the CsrA/RsmA family. As to quaternary structure, homodimer; the beta-strands of each monomer intercalate to form a hydrophobic core, while the alpha-helices form wings that extend away from the core.

The protein resides in the cytoplasm. Functionally, a key translational regulator that binds mRNA to regulate translation initiation and/or mRNA stability. Mediates global changes in gene expression, shifting from rapid growth to stress survival by linking envelope stress, the stringent response and the catabolite repression systems. Usually binds in the 5'-UTR; binding at or near the Shine-Dalgarno sequence prevents ribosome-binding, repressing translation, binding elsewhere in the 5'-UTR can activate translation and/or stabilize the mRNA. Its function is antagonized by small RNA(s). This chain is Translational regulator CsrA, found in Pasteurella multocida (strain Pm70).